Consider the following 97-residue polypeptide: Large ribosomal subunit protein uL23 (97 aa).

Belongs to the universal ribosomal protein uL23 family. In terms of assembly, part of the 50S ribosomal subunit. Contacts protein L29, and trigger factor when it is bound to the ribosome.

Functionally, one of the early assembly proteins it binds 23S rRNA. One of the proteins that surrounds the polypeptide exit tunnel on the outside of the ribosome. Forms the main docking site for trigger factor binding to the ribosome. This is Large ribosomal subunit protein uL23 from Brucella canis (strain ATCC 23365 / NCTC 10854 / RM-666).